The following is a 640-amino-acid chain: Chaperone protein DnaK (640 aa).

Phosphothreonine; by autocatalysis is present on T199. The segment at 603–640 (YTQQAEEPQPQKEEGKAAEEDVVDAEFEEVKEDKNKAS) is disordered. Basic and acidic residues predominate over residues 611-621 (QPQKEEGKAAE). Positions 622–632 (EDVVDAEFEEV) are enriched in acidic residues.

It belongs to the heat shock protein 70 family.

Functionally, acts as a chaperone. The sequence is that of Chaperone protein DnaK from Nitrosococcus oceani (strain ATCC 19707 / BCRC 17464 / JCM 30415 / NCIMB 11848 / C-107).